We begin with the raw amino-acid sequence, 144 residues long: Cytochrome c oxidase subunit 4 isoform 1, mitochondrial (144 aa).

The Mitochondrial matrix segment spans residues serine 1–asparagine 73. The residue at position 4 (lysine 4) is an N6-acetyllysine; alternate. N6-succinyllysine; alternate is present on lysine 4. N6-acetyllysine is present on lysine 28. Phosphoserine is present on residues serine 31 and serine 33. Lysine 35 carries the post-translational modification N6-acetyllysine; alternate. An N6-succinyllysine; alternate modification is found at lysine 35. Lysine 42 bears the N6-acetyllysine mark. Residues glutamate 74–tyrosine 99 form a helical membrane-spanning segment. Residues valine 100–lysine 144 are Mitochondrial intermembrane-facing.

Belongs to the cytochrome c oxidase IV family. As to quaternary structure, component of the cytochrome c oxidase (complex IV, CIV), a multisubunit enzyme composed of 14 subunits. The complex is composed of a catalytic core of 3 subunits MT-CO1, MT-CO2 and MT-CO3, encoded in the mitochondrial DNA, and 11 supernumerary subunits COX4I, COX5A, COX5B, COX6A, COX6B, COX6C, COX7A, COX7B, COX7C, COX8 and NDUFA4, which are encoded in the nuclear genome. The complex exists as a monomer or a dimer and forms supercomplexes (SCs) in the inner mitochondrial membrane with NADH-ubiquinone oxidoreductase (complex I, CI) and ubiquinol-cytochrome c oxidoreductase (cytochrome b-c1 complex, complex III, CIII), resulting in different assemblies (supercomplex SCI(1)III(2)IV(1) and megacomplex MCI(2)III(2)IV(2)). Interacts with PHB2; the interaction decreases in absence of SPHK2. Interacts with AFG1L. Interacts with ABCB7; this interaction allows the regulation of cellular iron homeostasis and cellular reactive oxygen species (ROS) levels in cardiomyocytes. Interacts with FLVCR2; this interaction occurs in the absence of heme and is disrupted upon heme binding. Interacts with IRGC.

Its subcellular location is the mitochondrion inner membrane. Its pathway is energy metabolism; oxidative phosphorylation. Functionally, component of the cytochrome c oxidase, the last enzyme in the mitochondrial electron transport chain which drives oxidative phosphorylation. The respiratory chain contains 3 multisubunit complexes succinate dehydrogenase (complex II, CII), ubiquinol-cytochrome c oxidoreductase (cytochrome b-c1 complex, complex III, CIII) and cytochrome c oxidase (complex IV, CIV), that cooperate to transfer electrons derived from NADH and succinate to molecular oxygen, creating an electrochemical gradient over the inner membrane that drives transmembrane transport and the ATP synthase. Cytochrome c oxidase is the component of the respiratory chain that catalyzes the reduction of oxygen to water. Electrons originating from reduced cytochrome c in the intermembrane space (IMS) are transferred via the dinuclear copper A center (CU(A)) of subunit 2 and heme A of subunit 1 to the active site in subunit 1, a binuclear center (BNC) formed by heme A3 and copper B (CU(B)). The BNC reduces molecular oxygen to 2 water molecules using 4 electrons from cytochrome c in the IMS and 4 protons from the mitochondrial matrix. This is Cytochrome c oxidase subunit 4 isoform 1, mitochondrial (COX4I1) from Hylobates agilis (Agile gibbon).